A 400-amino-acid chain; its full sequence is GTPase Obg (400 aa).

In terms of domain architecture, Obg spans 1–159 (MKFVDEVQIR…RTLKLELLLL (159 aa)). The OBG-type G domain occupies 160–333 (ADVGMLGLPN…VCYDILDLLD (174 aa)). GTP contacts are provided by residues 166–173 (GLPNAGKS), 191–195 (FTTLV), 213–216 (DIPG), 283–286 (NKMD), and 314–316 (SAI). Ser173 and Thr193 together coordinate Mg(2+).

Belongs to the TRAFAC class OBG-HflX-like GTPase superfamily. OBG GTPase family. Monomer. Mg(2+) serves as cofactor.

It is found in the cytoplasm. In terms of biological role, an essential GTPase which binds GTP, GDP and possibly (p)ppGpp with moderate affinity, with high nucleotide exchange rates and a fairly low GTP hydrolysis rate. Plays a role in control of the cell cycle, stress response, ribosome biogenesis and in those bacteria that undergo differentiation, in morphogenesis control. This is GTPase Obg from Aeromonas salmonicida (strain A449).